Here is a 482-residue protein sequence, read N- to C-terminus: Putative dipeptidase NECHADRAFT_87110 (482 aa).

Over residues 1–21 the composition is skewed to polar residues; it reads MADTQTPNLQNTAEGDANTSA. Positions 1 to 24 are disordered; that stretch reads MADTQTPNLQNTAEGDANTSAENE. Residue Asn-18 is glycosylated (N-linked (GlcNAc...) asparagine). The chain crosses the membrane as a helical span at residues 41–61; that stretch reads WLRYPFLVAGIALFLGPFSFF. Residues His-90, Asp-92, and Glu-201 each contribute to the Zn(2+) site. Cys-141 and Cys-230 form a disulfide bridge. Residue His-228 coordinates substrate. Residues His-272 and His-293 each contribute to the Zn(2+) site. Substrate contacts are provided by Arg-304 and Asp-364.

The protein belongs to the metallo-dependent hydrolases superfamily. Peptidase M19 family. It depends on Zn(2+) as a cofactor.

Its subcellular location is the membrane. The enzyme catalyses an L-aminoacyl-L-amino acid + H2O = 2 an L-alpha-amino acid. Hydrolyzes a wide range of dipeptides. The polypeptide is Putative dipeptidase NECHADRAFT_87110 (Fusarium vanettenii (strain ATCC MYA-4622 / CBS 123669 / FGSC 9596 / NRRL 45880 / 77-13-4) (Fusarium solani subsp. pisi)).